The chain runs to 78 residues: Exodeoxyribonuclease 7 small subunit (78 aa).

Belongs to the XseB family. In terms of assembly, heterooligomer composed of large and small subunits.

The protein localises to the cytoplasm. It catalyses the reaction Exonucleolytic cleavage in either 5'- to 3'- or 3'- to 5'-direction to yield nucleoside 5'-phosphates.. Its function is as follows. Bidirectionally degrades single-stranded DNA into large acid-insoluble oligonucleotides, which are then degraded further into small acid-soluble oligonucleotides. In Cutibacterium acnes (strain DSM 16379 / KPA171202) (Propionibacterium acnes), this protein is Exodeoxyribonuclease 7 small subunit.